The primary structure comprises 200 residues: Protein Mbur_1344 (200 aa).

In terms of domain architecture, AMMECR1 spans 5 to 192 (SEGEQTVRLA…EVEPRGDIEE (188 aa)).

The polypeptide is Protein Mbur_1344 (Methanococcoides burtonii (strain DSM 6242 / NBRC 107633 / OCM 468 / ACE-M)).